The following is a 1889-amino-acid chain: Bromodomain adjacent to zinc finger domain protein 2A (1889 aa).

Disordered stretches follow at residues 1-59 (MEME…NGLS), 384-433 (FGLN…SPAA), and 479-526 (TTPV…GAVA). Residues 35–59 (TNGSPMNFPQQGKSLNGDVNVNGLS) show a composition bias toward polar residues. Residues 332 to 726 (EGNPVISALD…ESQTPVQGQA (395 aa)) form a required for TTF1 binding region. Low complexity predominate over residues 423–433 (PAVSPTASPAA). Composition is skewed to polar residues over residues 479–489 (TTPVTSPQGSP) and 498–509 (QTVSPARKNVSS). Thr-499 carries the phosphothreonine modification. A Phosphoserine modification is found at Ser-501. Residues 538 to 609 (IATPEEVRLP…EHFSFSPRMP (72 aa)) form the MBD domain. The residue at position 540 (Thr-540) is a Phosphothreonine. Position 605 is a phosphoserine (Ser-605). Positions 638 to 791 (QAITGKRGRP…ARPSCRADKT (154 aa)) are disordered. 2 DNA-binding regions (a.T hook) span residues 641 to 653 (TGKRGRPRNNEKA) and 662 to 674 (KRGRGRPPKIKMP). Basic and acidic residues predominate over residues 648-660 (RNNEKAKNKEVPK). Residues 661-670 (VKRGRGRPPK) are compositionally biased toward basic residues. Lys-672 is subject to N6-acetyllysine; by KAT8. The span at 678–701 (NKTDNRLPKKLETQEILSEDDKAK) shows a compositional bias: basic and acidic residues. A coiled-coil region spans residues 686–813 (KKLETQEILS…QQAILEEMKK (128 aa)). Residues 702–713 (MTKNKKKMRQKV) show a composition bias toward basic residues. Polar residues predominate over residues 716–726 (GESQTPVQGQA). Composition is skewed to basic and acidic residues over residues 731–740 (KQDTKSLKQK) and 748–791 (AEKE…ADKT). The residue at position 790 (Lys-790) is an N6-acetyllysine. Residues 839-904 (SRAFSDCLTI…LKAALHDPGL (66 aa)) enclose the DDT domain. Residue Lys-857 forms a Glycyl lysine isopeptide (Lys-Gly) (interchain with G-Cter in SUMO2) linkage. A disordered region spans residues 1039 to 1063 (EETSGIEEEEEEENTTAVHGRRGRK). The residue at position 1042 (Ser-1042) is a Phosphoserine. A compositionally biased stretch (acidic residues) spans 1042–1052 (SGIEEEEEEEN). Glycyl lysine isopeptide (Lys-Gly) (interchain with G-Cter in SUMO2) cross-links involve residues Lys-1141 and Lys-1163. Disordered stretches follow at residues 1147–1247 (LMEV…GQSQ) and 1269–1397 (LSSS…GRPP). Ser-1174 carries the phosphoserine modification. The a.T hook 3 DNA-binding region spans 1176 to 1188 (ARSRGRPRKPKPG). 3 stretches are compositionally biased toward polar residues: residues 1190-1231 (LQPQ…QPSS), 1269-1278 (LSSSVLTPDS), and 1331-1346 (DQPTPSLQLLASSKPM). 3 positions are modified to phosphoserine: Ser-1374, Ser-1377, and Ser-1383. The segment at residues 1390 to 1402 (PKRRGRPPSKFFK) is a DNA-binding region (a.T hook 4). Ser-1545 carries the phosphoserine modification. Glycyl lysine isopeptide (Lys-Gly) (interchain with G-Cter in SUMO2) cross-links involve residues Lys-1662 and Lys-1695. The PHD-type zinc-finger motif lies at 1662-1712 (KVTCLVCRKGDNDEFLLLCDGCDRGCHIYCHRPKMEAVPEGDWFCAVCLSQ). The disordered stretch occupies residues 1720-1778 (QRPGFPKRGQKRKSSFPLTFPEGDSRRRMLSRSRDSPAVPRYPEDGLSPPKRRRHSMRS). Phosphoserine is present on Ser-1733. Thr-1738 is subject to Phosphothreonine. Residues 1742-1754 (GDSRRRMLSRSRD) are compositionally biased toward basic and acidic residues. Ser-1755 and Ser-1767 each carry phosphoserine. The segment covering 1769 to 1778 (PKRRRHSMRS) has biased composition (basic residues). A Bromo domain is found at 1777–1881 (RSHHSDLTFC…RFFESRWEEF (105 aa)).

Belongs to the WAL family. Component of the NoRC-1 ISWI chromatin remodeling complex at least composed of SMARCA1 and BAZ2A/TIP5, which regulates the spacing of histone octamers on the DNA template to facilitate access to DNA. Within the NoRC-1 ISWI chromatin remodeling complex interacts with SMARCA1; the interaction is direct. Component of the NoRC-5 ISWI chromatin remodeling complex (also called the NoRC nucleolar-remodeling complex), at least composed of SMARCA5/SNF2H and BAZ2A/TIP5, which regulates the spacing of histone octamers on the DNA template to facilitate access to DNA. Within the NoRC-5 ISWI chromatin remodeling complexes interacts with SMARCA5/SNF2H; the interaction is direct. Interacts with TTF1; the interaction is required for recruitment of the NoRC-5 ISWI chromatin remodeling complex to rDNA. Interacts with HDAC1. Interacts with SIN3A. Interacts with DNMT1 and DNM3B. Interacts with BEND3 and USP21. Ubiquitinated. Deubiquitinated by USP21 leading to its stabilization. In terms of processing, acetylation at Lys-672 by KAT8/MOF promotes its dissociation from pRNA, affecting heterochromatin formation, nucleosome positioning and rDNA silencing. Deacetylation by SIRT1 in late S phase enhances pRNA-binding, allowing de novo DNA methylation and heterochromatin formation. Acetylation is high during S phase and declines to background levels in late S phase when the silent copies of rRNA genes are replicated.

It localises to the nucleus. It is found in the nucleolus. Its function is as follows. Regulatory subunit of the ATP-dependent NoRC-1 and NoRC-5 ISWI chromatin remodeling complexes, which form ordered nucleosome arrays on chromatin and facilitate access to DNA during DNA-templated processes such as DNA replication, transcription, and repair. Both complexes regulate the spacing of nucleosomes along the chromatin and have the ability to slide mononucleosomes to the center of a DNA template. Directly stimulates the ATPase activity of SMARCA5 in the NoRC-5 ISWI chromatin remodeling complex. The NoRC-1 ISWI chromatin remodeling complex has a lower ATP hydrolysis rate than the NoRC-5 ISWI chromatin remodeling complex. Within the NoRC-5 ISWI chromatin remodeling complex, mediates silencing of a fraction of rDNA by recruiting histone-modifying enzymes and DNA methyltransferases, leading to heterochromatin formation and transcriptional silencing. In the complex, it plays a central role by being recruited to rDNA and by targeting chromatin modifying enzymes such as HDAC1, leading to repress RNA polymerase I transcription. Recruited to rDNA via its interaction with TTF1 and its ability to recognize and bind histone H4 acetylated on 'Lys-16' (H4K16ac), leading to deacetylation of H4K5ac, H4K8ac, H4K12ac but not H4K16ac. Specifically binds pRNAs, 150-250 nucleotide RNAs that are complementary in sequence to the rDNA promoter; pRNA-binding is required for heterochromatin formation and rDNA silencing. The sequence is that of Bromodomain adjacent to zinc finger domain protein 2A (Baz2a) from Mus musculus (Mouse).